The primary structure comprises 278 residues: Phosphatidylglycerol--prolipoprotein diacylglyceryl transferase (278 aa).

The next 3 helical transmembrane spans lie at 13–33 (LFGIPVYWYAIIIVSGIALAV), 50–70 (VFDFMLWGLPAAIVGARLYYV), and 89–109 (NGGLAIYGGLIGGGLALFFFT). Position 135 (arginine 135) interacts with a 1,2-diacyl-sn-glycero-3-phospho-(1'-sn-glycerol). The next 3 membrane-spanning stretches (helical) occupy residues 175-195 (QPTFLYESVWNVLGFIVLVLL), 205-225 (GEVFLGYIIWYSFGRFFIEGL), and 236-256 (IRVSQLLSLVMFVAAIVIVIV).

This sequence belongs to the Lgt family.

It is found in the cell membrane. The enzyme catalyses L-cysteinyl-[prolipoprotein] + a 1,2-diacyl-sn-glycero-3-phospho-(1'-sn-glycerol) = an S-1,2-diacyl-sn-glyceryl-L-cysteinyl-[prolipoprotein] + sn-glycerol 1-phosphate + H(+). It functions in the pathway protein modification; lipoprotein biosynthesis (diacylglyceryl transfer). Its function is as follows. Catalyzes the transfer of the diacylglyceryl group from phosphatidylglycerol to the sulfhydryl group of the N-terminal cysteine of a prolipoprotein, the first step in the formation of mature lipoproteins. This is Phosphatidylglycerol--prolipoprotein diacylglyceryl transferase from Enterococcus faecalis (strain ATCC 700802 / V583).